A 671-amino-acid chain; its full sequence is Zinc finger protein 568 (671 aa).

A disordered region spans residues 1–31 (MERLSQMAGRRAWCAEDSVPRQEEEDRTRPS). Residues 18–29 (SVPRQEEEDRTR) show a composition bias toward basic and acidic residues. KRAB domains lie at 34–105 (VTFK…RRSP) and 124–195 (LRFE…IWHP). Residues 214–366 (EKMAKKHTCP…QGSERPHKCK (153 aa)) form a disordered region. Basic and acidic residues-rich tracts occupy residues 226 to 251 (EDSK…EGHL), 296 to 312 (IERE…EHAQ), and 329 to 341 (RPQE…ERKK). 11 consecutive C2H2-type zinc fingers follow at residues 363 to 385 (HKCK…QKLH), 391 to 413 (YKCQ…HRVH), 419 to 441 (FECK…QRIH), 447 to 469 (HKCK…LLTH), 475 to 497 (FECK…QMSH), 503 to 525 (HKCK…QSVH), 531 to 553 (YKCK…QRAH), 559 to 581 (YKCK…QKVH), 587 to 609 (HKCK…ERSH), 615 to 637 (YECK…QKIH), and 643 to 665 (YKCQ…QRIH).

The protein belongs to the krueppel C2H2-type zinc-finger protein family. As to quaternary structure, interacts with TRIM28. Little or no expression detected in most adult tissues (brain, liver, kidney, spleen, testis, ovary). In the hippocampus, detected in neural stem cells within the subventricular zone and subgranular zone.

Its subcellular location is the nucleus. Its function is as follows. Has transcriptional repression activity, partially through the recruitment of the corepressor TRIM28 but also has repression activity independently of this interaction. Essential during embryonic development, where it acts as direct repressor of IGF2-P0, placental-specific transcript of IGF2, in early development and regulates convergent extension movements required for axis elongation and tissue morphogenesis in all germ layers. Also important for normal morphogenesis of extraembryonic tissues including the yolk sac, extraembryonic mesoderm and placenta. May enhance proliferation or maintenance of neural stem cells. The protein is Zinc finger protein 568 of Mus musculus (Mouse).